The following is a 907-amino-acid chain: MAAATAAAATVAGEGMEPRALQYEQTLMYGRYTQELGAFAKEEAARIRLGGPEPWKGSPSARATPELLEYGQSRCARCRICSVRCHKFLVSRVGEDWIFLVLLGLLMALVSWAMDYAIAVCLQAQQWMSRGLNTNILLQYLAWVTYPVVLITFSAGFTQILAPQAVGSGIPEMKTILRGVVLKEYLTLKTFVAKVIGLTCALGSGMPLGKEGPFVHIASMCAALLSKFLSLFGGIYENESRNTEMLAAACAVGVGCCFAAPIGGVLFSIEVTSTFFAVRNYWRGFFAATFSAFIFRVLAVWNRDEETITALFKTRFRLDFPFDLQELPAFAVIGIASGFGGALFVYLNRKIVQVMRKQKTINRFLMKKRLLFPALVTLLISTLTFPPGFGQFMAGQLSQKETLVTLFDNRTWVRQGLVEDLGAPSTSQAWSPPRANVFLTLVIFILMKFWMSALATTIPVPCGAFMPVFVIGAAFGRLVGESMAAWFPDGIHTDSSTYRIVPGGYAVVGAAALAGAVTHTVSTAVIVFELTGQIAHILPVMIAVILANAVAQSLQPSLYDSIIRIKKLPYLPELGWGRHQQYRVRVEDIMVRDVPHVALSCTFRDLRLALHRTKGRMLALVESPESMILLGSIERSQVVALLGAQLSPARRRQHMQKLRKAQMSPPSDQESPPSSETSIRFQVNTEDSGFPGAHGQTHKPLKPALKRGPSNATSLQEGTTGNMESAGIALRSLFCGSPPLESTTSELEKSESCDKRKLKRVRISLASDSDLEGKMSPEEILEWEEQQLDEPVNFSDCKIDPAPFQLVERTSLHKTHTIFSLLGVDHAYVTSIGRLIGIVTLKELRKAIEGSVTAQGVKVRPPLASFRDSATSSSDTETTEVHALWGPRSRHGLPREGTPSDSDDKCQ.

Topologically, residues 1-93 are cytoplasmic; that stretch reads MAAATAAAAT…RCHKFLVSRV (93 aa). The interval 22-40 is essential for channel gating by both voltage and cell volume; the sequence is QYEQTLMYGRYTQELGAFA. T26 bears the Phosphothreonine mark. A modulates channel gating by both voltage and cell volume region spans residues 42–55; the sequence is EEAARIRLGGPEPW. The next 2 membrane-spanning stretches (helical) occupy residues 94–127 and 136–161; these read GEDWIFLVLLGLLMALVSWAMDYAIAVCLQAQQW and ILLQYLAWVTYPVVLITFSAGFTQIL. The Selectivity filter part_1 signature appears at 167 to 171; the sequence is GSGIP. The helical intramembrane region spans 170–177; it reads IPEMKTIL. The next 2 membrane-spanning stretches (helical) occupy residues 186–204 and 211–229; these read LTLKTFVAKVIGLTCALGS and EGPFVHIASMCAALLSKFL. A Selectivity filter part_2 motif is present at residues 209–213; sequence GKEGP. Intramembrane regions (helical) lie at residues 245–257 and 261–269; these read MLAAACAVGVGCC and PIGGVLFSI. The next 5 helical transmembrane spans lie at 281–301, 327–355, 364–383, 435–455, and 463–486; these read YWRGFFAATFSAFIFRVLAVW, LPAFAVIGIASGFGGALFVYLNRKIVQVM, FLMKKRLLFPALVTLLISTL, ANVFLTLVIFILMKFWMSALA, and GAFMPVFVIGAAFGRLVGESMAAW. A Selectivity filter part_3 motif is present at residues 463 to 467; it reads GAFMP. The helical intramembrane region spans 503–517; sequence GGYAVVGAAALAGAV. Residues 518–519 constitute an intramembrane region (note=Loop between two helices); sequence TH. An intramembrane region (helical) is located at residues 520–531; the sequence is TVSTAVIVFELT. Positions 532–536 form an intramembrane region, note=Loop between two helices; sequence GQIAH. The helical transmembrane segment at 537-554 threads the bilayer; the sequence is ILPVMIAVILANAVAQSL. At 555-907 the chain is on the cytoplasmic side; that stretch reads QPSLYDSIIR…TPSDSDDKCQ (353 aa). The CBS 1 domain maps to 590-648; sequence MVRDVPHVALSCTFRDLRLALHRTKGRMLALVESPESMILLGSIERSQVVALLGAQLSP. Residues 650 to 660 are compositionally biased toward basic residues; that stretch reads RRRQHMQKLRK. The disordered stretch occupies residues 650–720; that stretch reads RRRQHMQKLR…NATSLQEGTT (71 aa). Residues 664–678 show a composition bias toward low complexity; that stretch reads SPPSDQESPPSSETS. Residues 696 to 705 are compositionally biased toward basic residues; that stretch reads QTHKPLKPAL. Positions 710-720 are enriched in polar residues; that stretch reads SNATSLQEGTT. S767 is subject to Phosphoserine. Residues 799 to 859 enclose the CBS 2 domain; sequence IDPAPFQLVE…GSVTAQGVKV (61 aa). The Basolateral membrane sorting signature appears at 821 to 822; it reads LL. A disordered region spans residues 865-907; sequence SFRDSATSSSDTETTEVHALWGPRSRHGLPREGTPSDSDDKCQ.

This sequence belongs to the chloride channel (TC 2.A.49) family. ClC-2/CLCN2 subfamily. As to quaternary structure, homodimer. Interacts with auxiliary subunit HEPACAM. Phosphorylated. Activated by dephosphorylation. In terms of tissue distribution, ubiquitously expressed. Expressed in neurons and glial cells (at protein level).

The protein localises to the cell membrane. The protein resides in the basolateral cell membrane. It localises to the cell projection. Its subcellular location is the dendritic spine membrane. It is found in the axon. It catalyses the reaction chloride(in) = chloride(out). The enzyme catalyses thiocyanate(in) = thiocyanate(out). It carries out the reaction bromide(in) = bromide(out). The catalysed reaction is nitrate(in) = nitrate(out). It catalyses the reaction iodide(out) = iodide(in). Common gate kinetics are down-regulated by intracellular ATP. Inhibited by AK-42, a derivative of meclofenamate. Inhibited by Cd(2+). Inhibited by Zn(2+) and PKC activation. Inhibited at acidic pH. CCLN2:HEPACAM channel conductance is up-regulated upon hypo-osmolarity. Voltage-gated and osmosensitive chloride channel. Forms a homodimeric channel where each subunit has its own ion conduction pathway. Conducts double-barreled currents controlled by two types of gates, two fast glutamate gates that control each subunit independently and a slow common gate that opens and shuts off both subunits simultaneously. Displays inward rectification currents activated upon membrane hyperpolarization and extracellular hypotonicity. Contributes to chloride conductance involved in neuron excitability. In hippocampal neurons, generates a significant part of resting membrane conductance and provides an additional chloride efflux pathway to prevent chloride accumulation in dendrites upon GABA receptor activation. In glia, associates with the auxiliary subunit HEPACAM/GlialCAM at astrocytic processes and myelinated fiber tracts where it may regulate transcellular chloride flux buffering extracellular chloride and potassium concentrations. Regulates aldosterone production in adrenal glands. The opening of CLCN2 channels at hyperpolarized membrane potentials in the glomerulosa causes cell membrane depolarization, activation of voltage-gated calcium channels and increased expression of aldosterone synthase, the rate-limiting enzyme for aldosterone biosynthesis. Contributes to chloride conductance in retinal pigment epithelium involved in phagocytosis of shed photoreceptor outer segments and photoreceptor renewal. Conducts chloride currents at the basolateral membrane of epithelial cells with a role in chloride reabsorption rather than secretion. Permeable to small monovalent anions with chloride &gt; thiocyanate &gt; bromide &gt; nitrate &gt; iodide ion selectivity. The protein is Chloride channel protein 2 (Clcn2) of Rattus norvegicus (Rat).